A 924-amino-acid chain; its full sequence is Ubiquitin carboxyl-terminal hydrolase 5 (924 aa).

Residues 15 to 145 (LSPEEERVFI…GPTLARRVIS (131 aa)) enclose the DUSP domain. The span at 64 to 83 (TNDGSSLSEHCDSPGSSTLK) shows a compositional bias: polar residues. The disordered stretch occupies residues 64–87 (TNDGSSLSEHCDSPGSSTLKKPSR). The USP domain maps to 317–916 (TGLLNLGNTC…AAYVLFYRRK (600 aa)). The active-site Nucleophile is the C326. The span at 648 to 667 (REESVGKKGNSDSSIPERRS) shows a compositional bias: basic and acidic residues. Residues 648–690 (REESVGKKGNSDSSIPERRSARFNNTEEEDKVGGLKKAKKSNS) form a disordered region. The active-site Proton acceptor is H874.

Belongs to the peptidase C19 family.

The enzyme catalyses Thiol-dependent hydrolysis of ester, thioester, amide, peptide and isopeptide bonds formed by the C-terminal Gly of ubiquitin (a 76-residue protein attached to proteins as an intracellular targeting signal).. Recognizes and hydrolyzes the peptide bond at the C-terminal Gly of ubiquitin. Involved in the processing of poly-ubiquitin precursors as well as that of ubiquitinated proteins. This chain is Ubiquitin carboxyl-terminal hydrolase 5 (UBP5), found in Arabidopsis thaliana (Mouse-ear cress).